Consider the following 695-residue polypeptide: IQ domain-containing protein E (695 aa).

The disordered stretch occupies residues 29–55 (KAKRKAFHKPPPTSPKSPYLSKPRKVA). Coiled coils occupy residues 157 to 264 (LHVQ…RLQT), 292 to 358 (SALL…SSKS), and 387 to 477 (NKDH…CPEV). Ser-322 is subject to Phosphoserine. Disordered stretches follow at residues 357–390 (KSHA…NKDH), 465–521 (EMKK…RRDA), 564–599 (ASKA…TGSP), and 618–695 (RARH…NFPV). The segment covering 465 to 482 (EMKKEEKEDCPEVPHKAQ) has biased composition (basic and acidic residues). IQ domains are found at residues 542 to 571 (LDEA…HGSE) and 601 to 630 (QEEA…RTTT).

As to quaternary structure, component of the EvC complex composed of EFCAB7, IQCE, EVC2 and EVC; built from two subcomplexes, EVC2:EVC and EFCAB7:IQCE. Interacts (via N-terminus) with EFCAB7 (via EF-hands 1 and 2); this interaction anchors the EVC-EVC2 complex in a signaling microdomain at the base of cilia and stimulates the Hedgehog (Hh) pathway. Interacts with EVC2 (via N-terminal end). Interacts with EVC.

The protein resides in the cell projection. It is found in the cilium membrane. Its function is as follows. Component of the EvC complex that positively regulates ciliary Hedgehog (Hh) signaling. Required for proper limb morphogenesis. The chain is IQ domain-containing protein E (IQCE) from Homo sapiens (Human).